A 34-amino-acid polypeptide reads, in one-letter code: Corticostatin-6 (34 aa).

Cystine bridges form between Cys3-Cys31, Cys5-Cys20, and Cys10-Cys30.

It belongs to the alpha-defensin family. Lung, spleen, small intestine, pituitary gland, adrenal medulla and plasma.

Its subcellular location is the secreted. In terms of biological role, microbicidal activity and inhibits corticotropin (ACTH) stimulated corticosterone production. This chain is Corticostatin-6, found in Oryctolagus cuniculus (Rabbit).